A 313-amino-acid polypeptide reads, in one-letter code: Ribosomal RNA small subunit methyltransferase H (313 aa).

S-adenosyl-L-methionine contacts are provided by residues 35 to 37, Asp55, Phe79, Asp100, and Gln107; that span reads GGH.

The protein belongs to the methyltransferase superfamily. RsmH family.

It is found in the cytoplasm. It carries out the reaction cytidine(1402) in 16S rRNA + S-adenosyl-L-methionine = N(4)-methylcytidine(1402) in 16S rRNA + S-adenosyl-L-homocysteine + H(+). In terms of biological role, specifically methylates the N4 position of cytidine in position 1402 (C1402) of 16S rRNA. The protein is Ribosomal RNA small subunit methyltransferase H of Burkholderia pseudomallei (strain 1106a).